The chain runs to 355 residues: Small ribosomal subunit protein uS2 (355 aa).

This sequence belongs to the universal ribosomal protein uS2 family.

The sequence is that of Small ribosomal subunit protein uS2 from Methylorubrum extorquens (strain CM4 / NCIMB 13688) (Methylobacterium extorquens).